The following is a 324-amino-acid chain: NADH-ubiquinone oxidoreductase chain 1 (324 aa).

9 helical membrane-spanning segments follow: residues 9 to 29 (LINP…LTLI), 43 to 63 (PNIV…KLFI), 77 to 97 (FLAT…PLPL), 106 to 126 (LGLL…LGSG), 146 to 166 (ISYE…AGGF), 177 to 197 (TIWL…STLA), 228 to 248 (LFFL…VILF), 259 to 279 (QISS…FLWI), and 299 to 319 (FLPL…ATTS).

The protein belongs to the complex I subunit 1 family.

It is found in the mitochondrion inner membrane. It carries out the reaction a ubiquinone + NADH + 5 H(+)(in) = a ubiquinol + NAD(+) + 4 H(+)(out). Core subunit of the mitochondrial membrane respiratory chain NADH dehydrogenase (Complex I) that is believed to belong to the minimal assembly required for catalysis. Complex I functions in the transfer of electrons from NADH to the respiratory chain. The immediate electron acceptor for the enzyme is believed to be ubiquinone. In Scyliorhinus canicula (Small-spotted catshark), this protein is NADH-ubiquinone oxidoreductase chain 1 (MT-ND1).